Consider the following 1375-residue polypeptide: Capping protein, Arp2/3 and myosin-I linker protein 3 (1375 aa).

The tract at residues 124 to 151 (IRRGNADTPEGPRDTSPNSETSTSTTHS) is disordered. A compositionally biased stretch (low complexity) spans 138–151 (TSPNSETSTSTTHS). LRR repeat units lie at residues 244-264 (SLEE…QKLA), 274-295 (VLHA…SLSQ), 303-323 (GLTK…QALG), 335-357 (SLRY…NALY), 365-386 (ALVH…GALL), 392-413 (HLTY…EAPP), 424-444 (TLSH…RALL), 455-475 (DLHL…ALQE), 482-501 (CIGS…LTLV), and 509-530 (SLKH…EEIL). Disordered stretches follow at residues 864–901 (RTLS…GTNI) and 969–1375 (KLRH…PGTD). Positions 981 to 997 (PRTTPPGPGRPSVPVPG) are enriched in pro residues. Positions 1007–1022 (RLDEGLEDFFSRRVMD) are enriched in basic and acidic residues. Over residues 1047 to 1062 (QKKRRRGLFHFRRPRS) the composition is skewed to basic residues. Positions 1078 to 1097 (LPPPPPPPPTQESPPSPDPP) are enriched in pro residues. Residues 1098–1108 (SLGNNSSPCWS) show a composition bias toward low complexity. Basic and acidic residues predominate over residues 1219 to 1229 (RRAEATWHIAE). Residues 1233-1244 (ANHSCQSPSPAS) show a composition bias toward polar residues. Positions 1272 to 1281 (PIGPRPPKPV) are enriched in pro residues. The span at 1348-1360 (QSCDKLEPDRRQP) shows a compositional bias: basic and acidic residues.

The protein belongs to the CARMIL family.

The protein resides in the cytoplasm. The protein localises to the cell membrane. This is Capping protein, Arp2/3 and myosin-I linker protein 3 (Carmil3) from Mus musculus (Mouse).